A 346-amino-acid chain; its full sequence is Phosphoribosylformylglycinamidine cyclo-ligase (346 aa).

The protein belongs to the AIR synthase family.

It is found in the cytoplasm. The catalysed reaction is 2-formamido-N(1)-(5-O-phospho-beta-D-ribosyl)acetamidine + ATP = 5-amino-1-(5-phospho-beta-D-ribosyl)imidazole + ADP + phosphate + H(+). It participates in purine metabolism; IMP biosynthesis via de novo pathway; 5-amino-1-(5-phospho-D-ribosyl)imidazole from N(2)-formyl-N(1)-(5-phospho-D-ribosyl)glycinamide: step 2/2. This chain is Phosphoribosylformylglycinamidine cyclo-ligase, found in Alteromonas mediterranea (strain DSM 17117 / CIP 110805 / LMG 28347 / Deep ecotype).